A 502-amino-acid polypeptide reads, in one-letter code: ATP synthase subunit alpha (502 aa).

169-176 provides a ligand contact to ATP; sequence GDRQTGKT.

This sequence belongs to the ATPase alpha/beta chains family. As to quaternary structure, F-type ATPases have 2 components, CF(1) - the catalytic core - and CF(0) - the membrane proton channel. CF(1) has five subunits: alpha(3), beta(3), gamma(1), delta(1), epsilon(1). CF(0) has three main subunits: a(1), b(2) and c(9-12). The alpha and beta chains form an alternating ring which encloses part of the gamma chain. CF(1) is attached to CF(0) by a central stalk formed by the gamma and epsilon chains, while a peripheral stalk is formed by the delta and b chains.

The protein resides in the cell inner membrane. The catalysed reaction is ATP + H2O + 4 H(+)(in) = ADP + phosphate + 5 H(+)(out). Functionally, produces ATP from ADP in the presence of a proton gradient across the membrane. The alpha chain is a regulatory subunit. This chain is ATP synthase subunit alpha, found in Citrifermentans bemidjiense (strain ATCC BAA-1014 / DSM 16622 / JCM 12645 / Bem) (Geobacter bemidjiensis).